We begin with the raw amino-acid sequence, 123 residues long: Small ribosomal subunit protein uS12cz/uS12cy (123 aa).

Belongs to the universal ribosomal protein uS12 family. In terms of assembly, part of the 30S ribosomal subunit.

Its subcellular location is the plastid. It localises to the chloroplast. In terms of biological role, with S4 and S5 plays an important role in translational accuracy. Located at the interface of the 30S and 50S subunits. The sequence is that of Small ribosomal subunit protein uS12cz/uS12cy (rps12-A) from Phaseolus vulgaris (Kidney bean).